A 198-amino-acid chain; its full sequence is Recombination protein RecR (198 aa).

The segment at cysteine 57–cysteine 72 adopts a C4-type zinc-finger fold. The Toprim domain occupies serine 80–proline 175.

Belongs to the RecR family.

In terms of biological role, may play a role in DNA repair. It seems to be involved in an RecBC-independent recombinational process of DNA repair. It may act with RecF and RecO. This is Recombination protein RecR from Bacillus licheniformis (strain ATCC 14580 / DSM 13 / JCM 2505 / CCUG 7422 / NBRC 12200 / NCIMB 9375 / NCTC 10341 / NRRL NRS-1264 / Gibson 46).